Consider the following 118-residue polypeptide: Ribonuclease P protein component (118 aa).

Belongs to the RnpA family. Consists of a catalytic RNA component (M1 or rnpB) and a protein subunit.

It catalyses the reaction Endonucleolytic cleavage of RNA, removing 5'-extranucleotides from tRNA precursor.. Its function is as follows. RNaseP catalyzes the removal of the 5'-leader sequence from pre-tRNA to produce the mature 5'-terminus. It can also cleave other RNA substrates such as 4.5S RNA. The protein component plays an auxiliary but essential role in vivo by binding to the 5'-leader sequence and broadening the substrate specificity of the ribozyme. This is Ribonuclease P protein component from Rickettsia rickettsii (strain Iowa).